A 170-amino-acid polypeptide reads, in one-letter code: Cathelicidin antimicrobial peptide (170 aa).

An N-terminal signal peptide occupies residues 1-30; it reads MKTQRDGPSLGRWSLVLLLLGLVMPLAIVA. The propeptide at 31–131 is cathelin-like domain (CLD); it reads QVLSYQEAVL…DISCDKDNRR (101 aa). 2 disulfides stabilise this stretch: cysteine 86-cysteine 97 and cysteine 108-cysteine 125. Positions 150 to 162 are active core; the sequence is LKKIGQKIKDFLG.

It belongs to the cathelicidin family. As to quaternary structure, monomer, homodimer or homotrimer (in vitro). Oligomerizes as tetra- or hexamer in solution (in vitro). Post-translationally, proteolytically cleaved by proteinase PRTN3 into antibacterial peptide LL-37. Proteolytically cleaved by cathepsin CTSG and neutrophil elastase ELANE. In terms of processing, resistant to proteolytic degradation in solution, and when bound to both zwitterionic (mimicking mammalian membranes) and negatively charged membranes (mimicking bacterial membranes). After secretion onto the skin surface, the CAMP gene product is processed by a serine protease-dependent mechanism into multiple novel antimicrobial peptides distinct from and shorter than cathelicidin LL-37. These peptides show enhanced antimicrobial action, acquiring the ability to kill skin pathogens such as S.aureus, E.coli and C.albicans. These peptides have lost the ability to stimulate CXCL8/IL8 release from keratinocytes. The peptides act synergistically, killing bacteria at lower concentrations when present together, and maintain activity at increased salt condition.

The protein resides in the secreted. Its subcellular location is the vesicle. Antimicrobial protein that is an integral component of the innate immune system. Binds to bacterial lipopolysaccharides (LPS). Acts via neutrophil N-formyl peptide receptors to enhance the release of CXCL2. Postsecretory processing generates multiple cathelicidin antimicrobial peptides with various lengths which act as a topical antimicrobial defense in sweat on skin. The unprocessed precursor form, cathelicidin antimicrobial peptide, inhibits the growth of Gram-negative E.coli and E.aerogenes with efficiencies comparable to that of the mature peptide LL-37 (in vitro). In terms of biological role, antimicrobial peptide that is an integral component of the innate immune system. Binds to bacterial lipopolysaccharides (LPS). Causes membrane permeabilization by forming transmembrane pores (in vitro). Causes lysis of E.coli. Exhibits antimicrobial activity against Gram-negative bacteria such as P.aeruginosa, S.typhimurium, E.aerogenes, E.coli and P.syringae, Gram-positive bacteria such as L.monocytogenes, S.epidermidis, S.pyogenes and S.aureus, as well as vancomycin-resistant enterococci (in vitro). Exhibits antimicrobial activity against methicillin-resistant S.aureus, P.mirabilis, and C.albicans in low-salt media, but not in media containing 100 mM NaCl (in vitro). Forms chiral supramolecular assemblies with quinolone signal (PQS) molecules of P.aeruginosa, which may lead to interference of bacterial quorum signaling and perturbance of bacterial biofilm formation. May form supramolecular fiber-like assemblies on bacterial membranes. Induces cytokine and chemokine producation as well as TNF/TNFA and CSF2/GMCSF production in normal human keratinocytes. Exhibits hemolytic activity against red blood cells. Functionally, exhibits antimicrobial activity against E.coli and B.megaterium (in vitro). In Chlorocebus aethiops (Green monkey), this protein is Cathelicidin antimicrobial peptide.